The chain runs to 381 residues: Transcriptional regulatory protein FlgR (381 aa).

One can recognise a Response regulatory domain in the interval 2–113; that stretch reads KIAIVEDDIN…LLLESIYRTK (112 aa). Asp51 is subject to 4-aspartylphosphate. Residues 136–365 form the Sigma-54 factor interaction domain; the sequence is FLAASKALEE…LLGVVERAAI (230 aa). Residues 164 to 171 and 227 to 236 contribute to the ATP site; these read GESGVGKE and ANKGTIFLDE.

Phosphorylated by FlgS.

Its function is as follows. Member of the two-component regulatory system FlgR/FlgS that induces the transcriptional induction of the genes needed in motility and flagellar biogenesis. Upon phosphorylation by FlgS, functions as a transcriptional regulator and activates transcription of RpoN-dependent flagellar genes. In Helicobacter pylori (strain ATCC 700392 / 26695) (Campylobacter pylori), this protein is Transcriptional regulatory protein FlgR (flgR).